The following is a 1150-amino-acid chain: PAN2-PAN3 deadenylation complex catalytic subunit PAN2 (1150 aa).

4 WD repeats span residues 26-67 (AHHS…MEFQ), 114-156 (GHVN…ITKE), 158-194 (PAPN…VINT), and 290-328 (GHTH…VSFV). Residues 326–471 (SFVDQGLPVE…IRTDIESLKS (146 aa)) form a linker region. One can recognise a USP domain in the interval 472-862 (VVPNMYHLFE…TPLVVMFQLK (391 aa)). One can recognise an Exonuclease domain in the interval 911–1079 (AIDAEFVLAK…HDSIEDANTA (169 aa)). 4 residues coordinate a divalent metal cation: Asp-913, Glu-915, Asp-1022, and Asp-1075. Residues 1118 to 1150 (GQSAQRTETPPMVDDAQPGALLPYQPPELLQGS) are disordered.

It belongs to the peptidase C19 family. PAN2 subfamily. In terms of assembly, forms a heterotrimer with an asymmetric homodimer of the regulatory subunit PAN3 to form the poly(A)-nuclease (PAN) deadenylation complex. A divalent metal cation serves as cofactor.

It localises to the cytoplasm. The catalysed reaction is Exonucleolytic cleavage of poly(A) to 5'-AMP.. Its activity is regulated as follows. Positively regulated by the regulatory subunit PAN3. In terms of biological role, catalytic subunit of the poly(A)-nuclease (PAN) deadenylation complex, one of two cytoplasmic mRNA deadenylases involved in mRNA turnover. PAN specifically shortens poly(A) tails of RNA and the activity is stimulated by poly(A)-binding protein PAB1. PAN deadenylation is followed by rapid degradation of the shortened mRNA tails by the CCR4-NOT complex. Deadenylated mRNAs are then degraded by two alternative mechanisms, namely exosome-mediated 3'-5' exonucleolytic degradation, or deadenylation-dependent mRNA decaping and subsequent 5'-3' exonucleolytic degradation by XRN1. May also be involved in post-transcriptional maturation of mRNA poly(A) tails. The sequence is that of PAN2-PAN3 deadenylation complex catalytic subunit PAN2 from Pyricularia oryzae (strain 70-15 / ATCC MYA-4617 / FGSC 8958) (Rice blast fungus).